The primary structure comprises 125 residues: MKLLPELKYSKDHEWVKVIDGDVVYIGITDYAQDQLGEILFVETPEVEDTVTKGVDFGVVESSKVASDLISPVNGEVLEVNEKLEDEPECINEDPYENWILKVKLADVAELDTLLSDKEYEAGLE.

The Lipoyl-binding domain maps to 23 to 104 (VVYIGITDYA…PYENWILKVK (82 aa)). Position 64 is an N6-lipoyllysine (lysine 64).

It belongs to the GcvH family. As to quaternary structure, the glycine cleavage system is composed of four proteins: P, T, L and H. (R)-lipoate serves as cofactor.

The glycine cleavage system catalyzes the degradation of glycine. The H protein shuttles the methylamine group of glycine from the P protein to the T protein. The sequence is that of Glycine cleavage system H protein from Clostridioides difficile (strain 630) (Peptoclostridium difficile).